We begin with the raw amino-acid sequence, 415 residues long: 3-isopropylmalate dehydratase large subunit (415 aa).

The [4Fe-4S] cluster site is built by C297, C355, and C358.

It belongs to the aconitase/IPM isomerase family. LeuC type 2 subfamily. In terms of assembly, heterodimer of LeuC and LeuD. It depends on [4Fe-4S] cluster as a cofactor.

The catalysed reaction is (2R,3S)-3-isopropylmalate = (2S)-2-isopropylmalate. It functions in the pathway amino-acid biosynthesis; L-leucine biosynthesis; L-leucine from 3-methyl-2-oxobutanoate: step 2/4. In terms of biological role, catalyzes the isomerization between 2-isopropylmalate and 3-isopropylmalate, via the formation of 2-isopropylmaleate. This is 3-isopropylmalate dehydratase large subunit from Sulfurisphaera tokodaii (strain DSM 16993 / JCM 10545 / NBRC 100140 / 7) (Sulfolobus tokodaii).